Reading from the N-terminus, the 391-residue chain is Processive diacylglycerol beta-glucosyltransferase (391 aa).

It belongs to the glycosyltransferase 28 family. UgtP subfamily.

The protein localises to the cell membrane. The catalysed reaction is a 1,2-diacyl-3-O-(beta-D-glucopyranosyl)-sn-glycerol + UDP-alpha-D-glucose = a 1,2-diacyl-3-O-(beta-D-Glc-(1-&gt;6)-beta-D-Glc)-sn-glycerol + UDP + H(+). It carries out the reaction a 1,2-diacyl-sn-glycerol + UDP-alpha-D-glucose = a 1,2-diacyl-3-O-(beta-D-glucopyranosyl)-sn-glycerol + UDP + H(+). The protein operates within glycolipid metabolism; diglucosyl-diacylglycerol biosynthesis. In terms of biological role, processive glucosyltransferase involved in the biosynthesis of both the bilayer- and non-bilayer-forming membrane glucolipids. Is able to successively transfer two glucosyl residues to diacylglycerol (DAG), thereby catalyzing the formation of beta-monoglucosyl-DAG (3-O-(beta-D-glucopyranosyl)-1,2-diacyl-sn-glycerol) and beta-diglucosyl-DAG (3-O-(beta-D-glucopyranosyl-beta-(1-&gt;6)-D-glucopyranosyl)-1,2-diacyl-sn-glycerol). Beta-diglucosyl-DAG is the predominant glycolipid found in Bacillales and is also used as a membrane anchor for lipoteichoic acid (LTA). This Staphylococcus epidermidis (strain ATCC 35984 / DSM 28319 / BCRC 17069 / CCUG 31568 / BM 3577 / RP62A) protein is Processive diacylglycerol beta-glucosyltransferase.